We begin with the raw amino-acid sequence, 326 residues long: Protein FAM50 homolog (326 aa).

Residues 77-111 (ISNRDLQVARGDQSSSTQSKDSQEAREKEEHVAKH) are disordered. Residues 97 to 109 (DSQEAREKEEHVA) are compositionally biased toward basic and acidic residues.

Belongs to the FAM50 family.

The chain is Protein FAM50 homolog from Caenorhabditis elegans.